Consider the following 240-residue polypeptide: UDP-2,3-diacylglucosamine hydrolase (240 aa).

Mn(2+) contacts are provided by Asp-8, His-10, Asp-41, Asn-79, and His-114. A substrate-binding site is contributed by 79-80 (NR). Positions 122, 160, 164, 167, and 195 each coordinate substrate. Mn(2+)-binding residues include His-195 and His-197.

It belongs to the LpxH family. Requires Mn(2+) as cofactor.

It localises to the cell inner membrane. The catalysed reaction is UDP-2-N,3-O-bis[(3R)-3-hydroxytetradecanoyl]-alpha-D-glucosamine + H2O = 2-N,3-O-bis[(3R)-3-hydroxytetradecanoyl]-alpha-D-glucosaminyl 1-phosphate + UMP + 2 H(+). The protein operates within glycolipid biosynthesis; lipid IV(A) biosynthesis; lipid IV(A) from (3R)-3-hydroxytetradecanoyl-[acyl-carrier-protein] and UDP-N-acetyl-alpha-D-glucosamine: step 4/6. Functionally, hydrolyzes the pyrophosphate bond of UDP-2,3-diacylglucosamine to yield 2,3-diacylglucosamine 1-phosphate (lipid X) and UMP by catalyzing the attack of water at the alpha-P atom. Involved in the biosynthesis of lipid A, a phosphorylated glycolipid that anchors the lipopolysaccharide to the outer membrane of the cell. The chain is UDP-2,3-diacylglucosamine hydrolase from Pectobacterium carotovorum subsp. carotovorum (strain PC1).